We begin with the raw amino-acid sequence, 117 residues long: Large ribosomal subunit protein uL18 (117 aa).

This sequence belongs to the universal ribosomal protein uL18 family. As to quaternary structure, part of the 50S ribosomal subunit; part of the 5S rRNA/L5/L18/L25 subcomplex. Contacts the 5S and 23S rRNAs.

Functionally, this is one of the proteins that bind and probably mediate the attachment of the 5S RNA into the large ribosomal subunit, where it forms part of the central protuberance. The protein is Large ribosomal subunit protein uL18 of Phytoplasma mali (strain AT).